Reading from the N-terminus, the 630-residue chain is 1-deoxy-D-xylulose-5-phosphate synthase (630 aa).

Thiamine diphosphate is bound by residues His-72 and 113–115; that span reads GHS. Mg(2+) is bound at residue Asp-144. Thiamine diphosphate contacts are provided by residues 145-146, Asn-173, Tyr-284, and Glu-367; that span reads GA. Asn-173 contacts Mg(2+).

Belongs to the transketolase family. DXPS subfamily. As to quaternary structure, homodimer. Mg(2+) is required as a cofactor. Requires thiamine diphosphate as cofactor.

It carries out the reaction D-glyceraldehyde 3-phosphate + pyruvate + H(+) = 1-deoxy-D-xylulose 5-phosphate + CO2. Its pathway is metabolic intermediate biosynthesis; 1-deoxy-D-xylulose 5-phosphate biosynthesis; 1-deoxy-D-xylulose 5-phosphate from D-glyceraldehyde 3-phosphate and pyruvate: step 1/1. Its function is as follows. Catalyzes the acyloin condensation reaction between C atoms 2 and 3 of pyruvate and glyceraldehyde 3-phosphate to yield 1-deoxy-D-xylulose-5-phosphate (DXP). The polypeptide is 1-deoxy-D-xylulose-5-phosphate synthase (Geobacillus sp. (strain WCH70)).